The chain runs to 454 residues: Guanine deaminase (454 aa).

The Zn(2+) site is built by histidine 82 and histidine 84. Substrate contacts are provided by residues 84 to 87 (HAPQ), 213 to 214 (RF), 240 to 243 (HISE), and aspartate 330. The Zn(2+) site is built by histidine 240 and aspartate 330. Serine 453 carries the post-translational modification Phosphoserine.

Belongs to the metallo-dependent hydrolases superfamily. ATZ/TRZ family. In terms of assembly, homodimer. The cofactor is Zn(2+).

The enzyme catalyses guanine + H2O + H(+) = xanthine + NH4(+). It functions in the pathway purine metabolism; guanine degradation; xanthine from guanine: step 1/1. Its function is as follows. Catalyzes the hydrolytic deamination of guanine, producing xanthine and ammonia. The chain is Guanine deaminase from Mus musculus (Mouse).